Reading from the N-terminus, the 501-residue chain is Lysine--tRNA ligase (501 aa).

Positions 411 and 418 each coordinate Mg(2+).

This sequence belongs to the class-II aminoacyl-tRNA synthetase family. Homodimer. Requires Mg(2+) as cofactor.

It is found in the cytoplasm. It catalyses the reaction tRNA(Lys) + L-lysine + ATP = L-lysyl-tRNA(Lys) + AMP + diphosphate. The protein is Lysine--tRNA ligase of Clostridium perfringens (strain ATCC 13124 / DSM 756 / JCM 1290 / NCIMB 6125 / NCTC 8237 / Type A).